A 301-amino-acid chain; its full sequence is GTPase Era (301 aa).

The 170-residue stretch at 4-173 folds into the Era-type G domain; that stretch reads KAGFVALIGK…LECISKHLSP (170 aa). The segment at 12-19 is G1; the sequence is GKPNAGKS. 12 to 19 contributes to the GTP binding site; that stretch reads GKPNAGKS. Residues 38-42 are G2; that stretch reads NATRK. Residues 64 to 67 form a G3 region; it reads DTPG. Residues 64–68 and 122–125 each bind GTP; these read DTPGL and SKID. The tract at residues 122–125 is G4; that stretch reads SKID. Residues 152 to 154 form a G5 region; sequence LSA. In terms of domain architecture, KH type-2 spans 204 to 280; the sequence is LSDEIPYESD…FLNLQVIAQK (77 aa).

Belongs to the TRAFAC class TrmE-Era-EngA-EngB-Septin-like GTPase superfamily. Era GTPase family. In terms of assembly, monomer.

It is found in the cytoplasm. The protein localises to the cell inner membrane. Its function is as follows. An essential GTPase that binds both GDP and GTP, with rapid nucleotide exchange. Plays a role in 16S rRNA processing and 30S ribosomal subunit biogenesis and possibly also in cell cycle regulation and energy metabolism. The polypeptide is GTPase Era (Helicobacter pylori (strain Shi470)).